Reading from the N-terminus, the 570-residue chain is DNA polymerase/3'-5' exonuclease PolX (570 aa).

Positions 1–315 (MHKKDIIRLL…PLIPPEIRES (315 aa)) are DNA polymerase type-X. Positions 193, 195, and 240 each coordinate a divalent metal cation. The interval 333–570 (QIKGDLHMHS…DVEAFLKRND (238 aa)) is 3'-5' exonuclease. Mn(2+)-binding residues include histidine 339, histidine 341, histidine 371, glutamate 410, histidine 437, histidine 465, aspartate 526, and histidine 528.

It in the N-terminal section; belongs to the DNA polymerase type-X family. The protein in the C-terminal section; belongs to the PHP family. As to quaternary structure, monomer. Mn(2+) is required as a cofactor. Mg(2+) serves as cofactor.

It carries out the reaction DNA(n) + a 2'-deoxyribonucleoside 5'-triphosphate = DNA(n+1) + diphosphate. The catalysed reaction is Exonucleolytic cleavage in the 3'- to 5'-direction to yield nucleoside 5'-phosphates.. With respect to regulation, the polymerization activity is inhibited in the presence of 2'-3'-dideoxynucleoside 5'-triphosphate (ddNTP). Its function is as follows. Strictly DNA-template-directed DNA polymerase, preferentially acting on DNA structures containing gaps from one to a few nucleotides and bearing a phosphate group at the 5' end of the downstream DNA. The fact that PolX is able to conduct filling of a single-nucleotide gap, allowing further sealing of the resulting nick by a DNA ligase, points to a putative role in base excision repair (BER) during the B.subtilis life cycle. Moreover, also possesses a 3'-5' exonuclease activity able to edit unpaired 3'-termini in a gapped DNA substrate and likely involved in resecting unannealed 3'-termini during DNA repair. The same PolX molecule could perform the subsequent gap-filling step. Does not display 5'-deoxyribose 5'-phosphate (dRP) lyase activity, as predicted by the lack of the lysine and tyrosine residues responsible for the dRP lyase activity in some other PolX members. The sequence is that of DNA polymerase/3'-5' exonuclease PolX (polX) from Bacillus subtilis (strain 168).